Consider the following 134-residue polypeptide: Nogalonic acid methyl ester cyclase (134 aa).

Nogalaviketone is bound at residue glutamine 95. Catalysis depends on aspartate 111, which acts as the Proton donor/acceptor.

The protein belongs to the polyketide cyclase DnrD family. In terms of assembly, homotetramer. Dimer of dimers.

It catalyses the reaction nogalaviketone = methyl nogalonate. It participates in antibiotic biosynthesis. In terms of biological role, involved in the biosynthesis of the aromatic polyketide antibiotic nogalamycin. Catalyzes the formation of nogalaviketone from nogalonic acid methyl ester (NAME), the last ring-closure step in the biosynthesis of nogalamycin. In Streptomyces nogalater, this protein is Nogalonic acid methyl ester cyclase.